The sequence spans 295 residues: Reticulon-like protein 1 (295 aa).

Over 1–50 (MSASAQHSQAQQQQQQKSCNCDLLLWRNPVQTGKYFGGSLLALLILKKVN) the chain is Cytoplasmic. In terms of domain architecture, Reticulon spans 20 to 220 (NCDLLLWRNP…ISNLVKSKTA (201 aa)). The chain crosses the membrane as a helical span at residues 51 to 73 (LITFFLKVAYTILFTTGSIEFVS). At 74–142 (KLFLGQGLIT…ALFLLHKFFS (69 aa)) the chain is on the lumenal side. Residues 143–163 (WFSIWTIVFVADIFTFTLPVI) traverse the membrane as a helical segment. Residues 164–295 (YHSYKHEIDA…LQNELEKNNA (132 aa)) are Cytoplasmic-facing. Phosphothreonine occurs at positions 186 and 219. A compositionally biased stretch (polar residues) spans 219-235 (TAPVSSTAGPQTASTSK). Residues 219-295 (TAPVSSTAGP…LQNELEKNNA (77 aa)) form a disordered region. The residue at position 232 (Ser-232) is a Phosphoserine. Residues 265–295 (STTQEFNVDELSNELKKSTKNLQNELEKNNA) are a coiled coil.

As to quaternary structure, interacts with POM33.

It localises to the endoplasmic reticulum membrane. In Saccharomyces cerevisiae (strain ATCC 204508 / S288c) (Baker's yeast), this protein is Reticulon-like protein 1 (RTN1).